The chain runs to 589 residues: V-type ATP synthase alpha chain 1 (589 aa).

239–246 (GPFGAGKT) provides a ligand contact to ATP.

It belongs to the ATPase alpha/beta chains family.

It catalyses the reaction ATP + H2O + 4 H(+)(in) = ADP + phosphate + 5 H(+)(out). Functionally, produces ATP from ADP in the presence of a proton gradient across the membrane. The V-type alpha chain is a catalytic subunit. In Treponema pallidum (strain Nichols), this protein is V-type ATP synthase alpha chain 1 (atpA1).